Reading from the N-terminus, the 522-residue chain is Glutamate--cysteine ligase, chloroplastic (522 aa).

Residues 1 to 45 (MALMSQAGSSHCIYSEKMKCISGHSSITSNMEMLKMKDICFGNIS) constitute a chloroplast transit peptide. Cys186 and Cys406 are oxidised to a cystine.

This sequence belongs to the carboxylate-amine ligase family. Glutamate--cysteine ligase type 2 subfamily. In terms of assembly, homodimer or monomer when oxidized or reduced, respectively. In terms of processing, the Cys-186-Cys-406 disulfide bridge is known to modulate the enzyme activity according to the redox status. The oxidized form constitutes the active enzyme.

The protein resides in the plastid. It is found in the chloroplast. It carries out the reaction L-cysteine + L-glutamate + ATP = gamma-L-glutamyl-L-cysteine + ADP + phosphate + H(+). It functions in the pathway sulfur metabolism; glutathione biosynthesis; glutathione from L-cysteine and L-glutamate: step 1/2. The chain is Glutamate--cysteine ligase, chloroplastic (GSH1) from Nicotiana tabacum (Common tobacco).